We begin with the raw amino-acid sequence, 264 residues long: Thymidylate synthase (264 aa).

Arg-21 contributes to the dUMP binding site. His-51 provides a ligand contact to (6R)-5,10-methylene-5,6,7,8-tetrahydrofolate. Residue 126–127 (RR) participates in dUMP binding. The Nucleophile role is filled by Cys-146. DUMP-binding positions include 166-169 (RSCD), Asn-177, and 207-209 (HLY). Residue Asp-169 coordinates (6R)-5,10-methylene-5,6,7,8-tetrahydrofolate. Ser-263 provides a ligand contact to (6R)-5,10-methylene-5,6,7,8-tetrahydrofolate.

Belongs to the thymidylate synthase family. Bacterial-type ThyA subfamily. Homodimer.

It localises to the cytoplasm. It catalyses the reaction dUMP + (6R)-5,10-methylene-5,6,7,8-tetrahydrofolate = 7,8-dihydrofolate + dTMP. It participates in pyrimidine metabolism; dTTP biosynthesis. In terms of biological role, catalyzes the reductive methylation of 2'-deoxyuridine-5'-monophosphate (dUMP) to 2'-deoxythymidine-5'-monophosphate (dTMP) while utilizing 5,10-methylenetetrahydrofolate (mTHF) as the methyl donor and reductant in the reaction, yielding dihydrofolate (DHF) as a by-product. This enzymatic reaction provides an intracellular de novo source of dTMP, an essential precursor for DNA biosynthesis. The polypeptide is Thymidylate synthase (Buchnera aphidicola subsp. Acyrthosiphon pisum (strain 5A)).